Reading from the N-terminus, the 554-residue chain is MAFNKQAESKKPNFLVIVADDLGWSDVSPFGSEIHTPNIERLAKEGVRLTNFHTASACSPTRSMLLSGTDNHIAGLGQMAETVRRFSKVWGGKPGYEGYLNDRVAALPEILQEAGYYTTMSGKWHLGLTPDRYPSKRGFKESFALLPGGGNHFAYEPGTRENPAVPFLPPLYTHNHDPVDHKSLKNFYSSNYFAEKLIDQLKNREKSQSFFAYLPFTAPHWPLQSPKEYINKYRGRYSEGPDVLRKNRLQAQKDLGLIPENVIPAPVDGMGTKSWDELTTEEKEFSARTMEVYAAMVELLDLNIGRVIDYLKTIGELDNTFVIFMSDNGAEGSVLEAIPVLSTKPPVKYFDNSLENLGNYNSFIWYGPRWAQAATAPSRLSKGFITEGGIRCPAIIRYPPLIKPDIISDEFVTVMDILPTILELAEVPHPGHKFQGRDVVIPRGKPWIDHFVHGKPVHKDTDFSGWELFGQRAIRKGNYKAIYVPKEGIKTEWELYDLSQDKGELENLAKVHPDILNELIEYWLVYEAETGVVTAPDDFVAENVGLFKPAKHNL.

Ca(2+) is bound by residues aspartate 327 and asparagine 328.

It belongs to the sulfatase family. It depends on Ca(2+) as a cofactor.

It is found in the cytoplasm. The protein localises to the nucleus. This is an uncharacterized protein from Schizosaccharomyces pombe (strain 972 / ATCC 24843) (Fission yeast).